A 453-amino-acid polypeptide reads, in one-letter code: MDLFGKKVLVIGMGKSGISSARFLKKHGAYVVAFDEKREDEMKTQQKETIRKFADELYFNDLPDAVVDTSDMVVISPGVPLTKRYITLAHKRGIEVIGEIELAYRFCRSKNIVAITGTNGKTTTTTLVGEILKKVFDNVIVCGNIGFPFIDYVESSTDDTIFVIEISSFQLETIKYFKPMVGCILNITPDHLNRHMNMDNYIRAKMRIFENIDQEGYSVLNMDNSITRDLIGCAKGTVITFSKNESDTQNSVFVDGDFIYRNFLGKVEKVMRKDDIFMPGEHNLENTLAAIGCVLPFEIQPSIIEKTLKEFKGVEHRIEFVREINGVRFYNDSKGTNTDASSKALNSFEVPIILIAGGYDKGESFEKFAKLISQKVKKVFLLGQTKQKIADQLQKIGYLNFEFVEDLKEAVKKSFEIAKEGDVVLLSPACASWDMFESYEQRGRLFKQYVNEL.

ATP is bound at residue glycine 117 to threonine 123.

Belongs to the MurCDEF family.

Its subcellular location is the cytoplasm. The catalysed reaction is UDP-N-acetyl-alpha-D-muramoyl-L-alanine + D-glutamate + ATP = UDP-N-acetyl-alpha-D-muramoyl-L-alanyl-D-glutamate + ADP + phosphate + H(+). It participates in cell wall biogenesis; peptidoglycan biosynthesis. Cell wall formation. Catalyzes the addition of glutamate to the nucleotide precursor UDP-N-acetylmuramoyl-L-alanine (UMA). The polypeptide is UDP-N-acetylmuramoylalanine--D-glutamate ligase (Caldicellulosiruptor saccharolyticus (strain ATCC 43494 / DSM 8903 / Tp8T 6331)).